The primary structure comprises 750 residues: Methylmalonyl-CoA mutase, mitochondrial (750 aa).

The N-terminal 32 residues, methionine 1–leucine 32, are a transit peptide targeting the mitochondrion. Glutamine 50 serves as a coordination point for malonyl-CoA. Position 89 is an N6-acetyllysine (lysine 89). Malonyl-CoA is bound by residues tyrosine 96 to methionine 99 and threonine 106 to tyrosine 110. Lysine 212 carries the post-translational modification N6-acetyllysine. Malonyl-CoA contacts are provided by residues threonine 216–glutamine 218, arginine 228, lysine 255, histidine 265, and arginine 304–serine 306. Lysine 335 is modified (N6-acetyllysine). Lysine 343 carries the post-translational modification N6-succinyllysine. Serine 481 is subject to Phosphoserine. The residue at position 595 (lysine 595) is an N6-succinyllysine. N6-acetyllysine is present on lysine 602. The B12-binding domain occupies arginine 614–lysine 746. Histidine 627 is an adenosylcob(III)alamin binding site.

The protein belongs to the methylmalonyl-CoA mutase family. Homodimer. Interacts (the apoenzyme form) with MMAA; the interaction is GTP dependent. Requires adenosylcob(III)alamin as cofactor.

The protein localises to the mitochondrion matrix. It localises to the mitochondrion. It is found in the cytoplasm. The catalysed reaction is (R)-methylmalonyl-CoA = succinyl-CoA. With respect to regulation, inhibited by itaconyl-CoA, a metabolite that inactivates the coenzyme B12 cofactor. Catalyzes the reversible isomerization of methylmalonyl-CoA (MMCoA) (generated from branched-chain amino acid metabolism and degradation of dietary odd chain fatty acids and cholesterol) to succinyl-CoA (3-carboxypropionyl-CoA), a key intermediate of the tricarboxylic acid cycle. This is Methylmalonyl-CoA mutase, mitochondrial (MMUT) from Pongo abelii (Sumatran orangutan).